The following is a 109-amino-acid chain: Large ribosomal subunit protein P1 (109 aa).

A disordered region spans residues 71–109; the sequence is APAAASSAPAKKEEPKKEEPKKEEPKEEETDMDMGDLFG. The segment covering 80–95 has biased composition (basic and acidic residues); that stretch reads AKKEEPKKEEPKKEEP. Repeat copies occupy residues 81-85, 86-90, and 91-95. Residues 81–95 are 3 X 5 AA tandem repeats of K-K-E-E-P; it reads KKEEPKKEEPKKEEP. Acidic residues predominate over residues 96-109; sequence KEEETDMDMGDLFG.

Belongs to the eukaryotic ribosomal protein P1/P2 family. Post-translationally, not phosphorylated.

This is Large ribosomal subunit protein P1 (RPLP1) from Tetrahymena thermophila.